We begin with the raw amino-acid sequence, 84 residues long: RNA-binding protein Hfq (84 aa).

One can recognise a Sm domain in the interval 10–70 (DNVLNQVRKN…VSTIIPGKTL (61 aa)).

The protein belongs to the Hfq family. As to quaternary structure, homohexamer.

RNA chaperone that binds small regulatory RNA (sRNAs) and mRNAs to facilitate mRNA translational regulation in response to envelope stress, environmental stress and changes in metabolite concentrations. Also binds with high specificity to tRNAs. The sequence is that of RNA-binding protein Hfq from Natranaerobius thermophilus (strain ATCC BAA-1301 / DSM 18059 / JW/NM-WN-LF).